A 155-amino-acid chain; its full sequence is MVKNTEDKPLAQNKKARHDYEIYETFEAGIVLTGTEIKSVRQAKIQLKDGFARVRNGEVWLSNVHIAPFEQGNIFNVEELRTRKLLLNKKEIAKIDKELSGTGITFIPLKVYLKNGFAKVLMGLARGKKDYDKRETLKRKEQNRDIARQIKAYNR.

It belongs to the SmpB family.

It localises to the cytoplasm. Required for rescue of stalled ribosomes mediated by trans-translation. Binds to transfer-messenger RNA (tmRNA), required for stable association of tmRNA with ribosomes. tmRNA and SmpB together mimic tRNA shape, replacing the anticodon stem-loop with SmpB. tmRNA is encoded by the ssrA gene; the 2 termini fold to resemble tRNA(Ala) and it encodes a 'tag peptide', a short internal open reading frame. During trans-translation Ala-aminoacylated tmRNA acts like a tRNA, entering the A-site of stalled ribosomes, displacing the stalled mRNA. The ribosome then switches to translate the ORF on the tmRNA; the nascent peptide is terminated with the 'tag peptide' encoded by the tmRNA and targeted for degradation. The ribosome is freed to recommence translation, which seems to be the essential function of trans-translation. This Lactococcus lactis subsp. lactis (strain IL1403) (Streptococcus lactis) protein is SsrA-binding protein.